We begin with the raw amino-acid sequence, 422 residues long: Tyrosine--tRNA ligase (422 aa).

Tyr-35 is a binding site for L-tyrosine. A 'HIGH' region motif is present at residues 40-49 (PTAPSLHLGN). The L-tyrosine site is built by Tyr-170 and Gln-174. A 'KMSKS' region motif is present at residues 231-235 (KFGKT). Lys-234 serves as a coordination point for ATP. One can recognise an S4 RNA-binding domain in the interval 353–419 (APVVDLFAEV…GKKNLAAVEV (67 aa)).

The protein belongs to the class-I aminoacyl-tRNA synthetase family. TyrS type 1 subfamily. In terms of assembly, homodimer.

It is found in the cytoplasm. It catalyses the reaction tRNA(Tyr) + L-tyrosine + ATP = L-tyrosyl-tRNA(Tyr) + AMP + diphosphate + H(+). In terms of biological role, catalyzes the attachment of tyrosine to tRNA(Tyr) in a two-step reaction: tyrosine is first activated by ATP to form Tyr-AMP and then transferred to the acceptor end of tRNA(Tyr). The sequence is that of Tyrosine--tRNA ligase from Streptomyces avermitilis (strain ATCC 31267 / DSM 46492 / JCM 5070 / NBRC 14893 / NCIMB 12804 / NRRL 8165 / MA-4680).